The primary structure comprises 82 residues: Small ribosomal subunit protein bS16 (82 aa).

It belongs to the bacterial ribosomal protein bS16 family.

The sequence is that of Small ribosomal subunit protein bS16 from Shewanella sp. (strain ANA-3).